Here is a 468-residue protein sequence, read N- to C-terminus: ATP synthase subunit beta (468 aa).

Residue 155 to 162 (GGAGVGKT) coordinates ATP.

It belongs to the ATPase alpha/beta chains family. In terms of assembly, F-type ATPases have 2 components, CF(1) - the catalytic core - and CF(0) - the membrane proton channel. CF(1) has five subunits: alpha(3), beta(3), gamma(1), delta(1), epsilon(1). CF(0) has three main subunits: a(1), b(2) and c(9-12). The alpha and beta chains form an alternating ring which encloses part of the gamma chain. CF(1) is attached to CF(0) by a central stalk formed by the gamma and epsilon chains, while a peripheral stalk is formed by the delta and b chains.

Its subcellular location is the cell inner membrane. It carries out the reaction ATP + H2O + 4 H(+)(in) = ADP + phosphate + 5 H(+)(out). Functionally, produces ATP from ADP in the presence of a proton gradient across the membrane. The catalytic sites are hosted primarily by the beta subunits. This chain is ATP synthase subunit beta, found in Thermotoga petrophila (strain ATCC BAA-488 / DSM 13995 / JCM 10881 / RKU-1).